The primary structure comprises 481 residues: UDP-glycosyltransferase 72B3 (481 aa).

UDP-alpha-D-glucose-binding positions include Ser-277, 347–349 (APQ), 364–372 (HCGWNSSLE), and 386–389 (YAEQ).

It belongs to the UDP-glycosyltransferase family.

Functionally, possesses low quercetin 3-O-glucosyltransferase activity in vitro. This chain is UDP-glycosyltransferase 72B3 (UGT72B3), found in Arabidopsis thaliana (Mouse-ear cress).